The sequence spans 144 residues: Transcription antitermination protein NusB (144 aa).

It belongs to the NusB family.

Its function is as follows. Involved in transcription antitermination. Required for transcription of ribosomal RNA (rRNA) genes. Binds specifically to the boxA antiterminator sequence of the ribosomal RNA (rrn) operons. The protein is Transcription antitermination protein NusB of Blochmanniella pennsylvanica (strain BPEN).